A 283-amino-acid chain; its full sequence is Phosphatidylglycerol--prolipoprotein diacylglyceryl transferase (283 aa).

3 helical membrane passes run 17–37, 56–76, and 88–108; these read LAVR…TFLG, FLTW…VLFY, and IFKV…VVIA. A 1,2-diacyl-sn-glycero-3-phospho-(1'-sn-glycerol) is bound at residue R139. The next 2 membrane-spanning stretches (helical) occupy residues 222 to 242 and 255 to 275; these read GQVA…AEFA and GLSM…VGFV.

This sequence belongs to the Lgt family.

Its subcellular location is the cell inner membrane. The enzyme catalyses L-cysteinyl-[prolipoprotein] + a 1,2-diacyl-sn-glycero-3-phospho-(1'-sn-glycerol) = an S-1,2-diacyl-sn-glyceryl-L-cysteinyl-[prolipoprotein] + sn-glycerol 1-phosphate + H(+). Its pathway is protein modification; lipoprotein biosynthesis (diacylglyceryl transfer). In terms of biological role, catalyzes the transfer of the diacylglyceryl group from phosphatidylglycerol to the sulfhydryl group of the N-terminal cysteine of a prolipoprotein, the first step in the formation of mature lipoproteins. This chain is Phosphatidylglycerol--prolipoprotein diacylglyceryl transferase, found in Neisseria meningitidis serogroup B (strain ATCC BAA-335 / MC58).